The sequence spans 415 residues: Methylthioribose-1-phosphate isomerase (415 aa).

The active-site Proton donor is D284.

It belongs to the eIF-2B alpha/beta/delta subunits family. MtnA subfamily.

The protein resides in the cytoplasm. Its subcellular location is the nucleus. The enzyme catalyses 5-(methylsulfanyl)-alpha-D-ribose 1-phosphate = 5-(methylsulfanyl)-D-ribulose 1-phosphate. It functions in the pathway amino-acid biosynthesis; L-methionine biosynthesis via salvage pathway; L-methionine from S-methyl-5-thio-alpha-D-ribose 1-phosphate: step 1/6. In terms of biological role, catalyzes the interconversion of methylthioribose-1-phosphate (MTR-1-P) into methylthioribulose-1-phosphate (MTRu-1-P). The protein is Methylthioribose-1-phosphate isomerase of Candida glabrata (strain ATCC 2001 / BCRC 20586 / JCM 3761 / NBRC 0622 / NRRL Y-65 / CBS 138) (Yeast).